The chain runs to 856 residues: V-type proton ATPase 116 kDa subunit a 2 (856 aa).

At 1–393 (MGSLFRSETM…DAYGVGSYRE (393 aa)) the chain is on the cytoplasmic side. The helical transmembrane segment at 394–412 (VNPALFTIITFPFLFAVMF) threads the bilayer. The Vacuolar portion of the chain corresponds to 413–414 (GD). A helical membrane pass occupies residues 415–431 (FGHGFVMFLFALLLVLN). At 432–445 (ENHPRLNQSQEIMR) the chain is on the cytoplasmic side. A helical membrane pass occupies residues 446–475 (MFFNGRYILLLMGLFSVYTGLIYNDCFSKS). The Vacuolar segment spans residues 476 to 549 (VNLFGSGWNV…ATNRLTFLNS (74 aa)). N-linked (GlcNAc...) asparagine glycans are attached at residues Asn484 and Asn505. The helical transmembrane segment at 550 to 569 (FKMKMSVILGIIHMTFGVIL) threads the bilayer. The Cytoplasmic portion of the chain corresponds to 570–587 (GIFNHLHFRKKFNIYLVS). A helical transmembrane segment spans residues 588–608 (IPELLFMLCIFGYLIFMIFYK). The Vacuolar segment spans residues 609-651 (WLVFSAETSRVAPSILIEFINMFLFPASKTSGLYTGQEYVQRV). The helical transmembrane segment at 652 to 671 (LLVVTALSVPVLFLGKPLFL) threads the bilayer. Residues 672–739 (LWLHNGRSCF…EILMTQVIHS (68 aa)) lie on the Cytoplasmic side of the membrane. 2 positions are modified to phosphoserine: Ser695 and Ser700. The chain crosses the membrane as a helical span at residues 740 to 764 (IEYCLGCISNTASYLRLWALSLAHA). Residues 765–785 (QLSDVLWAMLMRVGLRVDTTY) lie on the Vacuolar side of the membrane. A helical membrane pass occupies residues 786 to 824 (GVLLLLPVIALFAVLTIFILLIMEGLSAFLHAIRLHWVE). The Cytoplasmic portion of the chain corresponds to 825–856 (FQNKFYVGAGTKFVPFSFSLLSSKFNNDDSVA).

This sequence belongs to the V-ATPase 116 kDa subunit family. V-ATPase is a heteromultimeric enzyme made up of two complexes: the ATP-hydrolytic V1 complex and the proton translocation V0 complex. The V1 complex consists of three catalytic AB heterodimers that form a heterohexamer, three peripheral stalks each consisting of EG heterodimers, one central rotor including subunits D and F, and the regulatory subunits C and H. The proton translocation complex V0 consists of the proton transport subunit a, a ring of proteolipid subunits c9c'', rotary subunit d, subunits e and f, and the accessory subunits ATP6AP1/Ac45 and ATP6AP2/PRR. Directly interacts with PSCD2 through its N-terminal cytosolic tail in an intra-endosomal acidification-dependent manner. Disruption of this interaction results in the inhibition of endocytosis. Interacts with SPAAR.

Its subcellular location is the cell membrane. It localises to the endosome membrane. Functionally, subunit of the V0 complex of vacuolar(H+)-ATPase (V-ATPase), a multisubunit enzyme composed of a peripheral complex (V1) that hydrolyzes ATP and a membrane integral complex (V0) that translocates protons. V-ATPase is responsible for acidifying and maintaining the pH of intracellular compartments and in some cell types, is targeted to the plasma membrane, where it is responsible for acidifying the extracellular environment. Essential component of the endosomal pH-sensing machinery. May play a role in maintaining the Golgi functions, such as glycosylation maturation, by controlling the Golgi pH. In aerobic conditions, involved in intracellular iron homeostasis, thus triggering the activity of Fe(2+) prolyl hydroxylase (PHD) enzymes, and leading to HIF1A hydroxylation and subsequent proteasomal degradation. The protein is V-type proton ATPase 116 kDa subunit a 2 (ATP6V0A2) of Homo sapiens (Human).